We begin with the raw amino-acid sequence, 49 residues long: Protein YdfW (49 aa).

Positions 16 to 49 (PKADHPWLTRRTQSHQQVKPPKLPKKKPDPDKKD) are disordered.

Functionally, may be involved in H(2) production during fermentative growth. The sequence is that of Protein YdfW (ydfW) from Escherichia coli (strain K12).